Consider the following 95-residue polypeptide: Trypomastigote decay-accelerating factor (95 aa).

It belongs to the receptors of complement activation (RCA) family.

In terms of biological role, interferes with the efficient assembly of the host C3 convertase. Could protect parasites from complement-mediated lysis by sera from a number of different species. The sequence is that of Trypomastigote decay-accelerating factor from Trypanosoma cruzi.